The primary structure comprises 539 residues: MKTIGEFNAAHGPEAIGLTDLTAVHWNLEAPRLYEEALRRGEAQLARGGALVATTGSHTGRSPKDKVVVRDAGTENEIWWDNNGSITREQFATLLEDFRAHARGKELFAQDLYGGADPAHRVRARVYTELAWHSLFIRNLLIRPERGELAAYVPELTIIDLPSFQADPVRHGCRSKTVIAIDFAQKIVLIGGSAYAGEMKKSVFTYLNYVLPGAGVMPMHCSANAALDETGDSALFFGLSGTGKTTLSNDSSRKLIGDDEHGWSRDGIFNFEGGCYAKTIRLSRNAEPEIYATTERFGTVMENVVIDPLTRVPDFDDATLTENTRCAYPLDFIANASATGRAGHPKNIVMLTCDAFGVMPPIARLTGAEAMYHFLSGYTAKVAGTERGLTAPEATFSTCFGAPFMPRHPSVYGNLLRALMAEHGVDCWLVNTGWTGGGVGTGRRMPIRVTRRLLSAALDGSLAQTEFRRDPYFGFSVPVEVAGVETQVLSPVETWTNKAAFAETATRLVTMFRENFKRFESHVDADVRAAEPVAAPIAA.

The substrate site is built by Arg-61, Tyr-195, and Lys-201. ATP is bound by residues Lys-201, His-220, and 238-246 (GLSGTGKTT). Residues Lys-201 and His-220 each coordinate Mn(2+). Asp-259 provides a ligand contact to Mn(2+). ATP is bound by residues Glu-287, Arg-325, and Thr-450. Arg-325 serves as a coordination point for substrate.

Belongs to the phosphoenolpyruvate carboxykinase (ATP) family. The cofactor is Mn(2+).

Its subcellular location is the cytoplasm. It catalyses the reaction oxaloacetate + ATP = phosphoenolpyruvate + ADP + CO2. It participates in carbohydrate biosynthesis; gluconeogenesis. Involved in the gluconeogenesis. Catalyzes the conversion of oxaloacetate (OAA) to phosphoenolpyruvate (PEP) through direct phosphoryl transfer between the nucleoside triphosphate and OAA. The chain is Phosphoenolpyruvate carboxykinase (ATP) from Methylorubrum populi (strain ATCC BAA-705 / NCIMB 13946 / BJ001) (Methylobacterium populi).